The chain runs to 438 residues: MPKRIRMTTSNATNSLIEDLRWRGLLNQTTDENGIAELLNSGPQTIYIGFDPTATSLHVGGMMQLMMLRRFQRAGHNPIALVGGATGMIGDPSGKSEERNLLSADQLQKNVDGVAAQMRHFLDFEGDNAAKLLNNFDWMKDYSYLEFLRDVGKNFPVGAMMGKESVRSRLESEAGLSYTEFSYMLLQAYDFVNLAQTHDCRIQAGGSDQWGNITAGIDLGRRMLGKQLFGITAPLLTTSDGRKMGKTESGAVWLDPERTSPYAFYQYWINVADEDVMRCLAYLTEIERAEYDELEDKTKNDPGQRTAQKRLAQWLTELVHGEAGVQSAQRATQILFGGELGDTTDSQLREIFADVPSCDVPKSALEGEGLWIVEALQTAKLCNSGGDARRALSEGGVYVNNTRVEDVQKRLTVDDLDGRSVLVLRRGKRKYALLKIQD.

Tyr47 contacts L-tyrosine. Residues 52–61 (PTATSLHVGG) carry the 'HIGH' region motif. Positions 183 and 187 each coordinate L-tyrosine. A 'KMSKS' region motif is present at residues 243-247 (KMGKT). Lys246 lines the ATP pocket. The S4 RNA-binding domain occupies 370–436 (LWIVEALQTA…GKRKYALLKI (67 aa)).

It belongs to the class-I aminoacyl-tRNA synthetase family. TyrS type 1 subfamily. Homodimer.

Its subcellular location is the cytoplasm. It catalyses the reaction tRNA(Tyr) + L-tyrosine + ATP = L-tyrosyl-tRNA(Tyr) + AMP + diphosphate + H(+). Functionally, catalyzes the attachment of tyrosine to tRNA(Tyr) in a two-step reaction: tyrosine is first activated by ATP to form Tyr-AMP and then transferred to the acceptor end of tRNA(Tyr). In Rhodopirellula baltica (strain DSM 10527 / NCIMB 13988 / SH1), this protein is Tyrosine--tRNA ligase.